Reading from the N-terminus, the 541-residue chain is Glycogen synthase (541 aa).

Lys17 contributes to the ADP-alpha-D-glucose binding site. A disordered region spans residues 497-541 (LARPASPPDTAPVGKPARRRRTTALSTTARAHPVARAAGREKIRA).

This sequence belongs to the glycosyltransferase 1 family. Bacterial/plant glycogen synthase subfamily.

It catalyses the reaction [(1-&gt;4)-alpha-D-glucosyl](n) + ADP-alpha-D-glucose = [(1-&gt;4)-alpha-D-glucosyl](n+1) + ADP + H(+). The protein operates within glycan biosynthesis; glycogen biosynthesis. In terms of biological role, synthesizes alpha-1,4-glucan chains using ADP-glucose. This Ralstonia nicotianae (strain ATCC BAA-1114 / GMI1000) (Ralstonia solanacearum) protein is Glycogen synthase.